A 301-amino-acid chain; its full sequence is Homoserine O-acetyltransferase (301 aa).

Cysteine 142 serves as the catalytic Acyl-thioester intermediate. Residues lysine 163 and serine 192 each contribute to the substrate site. The Proton acceptor role is filled by histidine 235. Glutamate 237 is a catalytic residue. Arginine 249 contributes to the substrate binding site.

This sequence belongs to the MetA family.

The protein localises to the cytoplasm. The enzyme catalyses L-homoserine + acetyl-CoA = O-acetyl-L-homoserine + CoA. It functions in the pathway amino-acid biosynthesis; L-methionine biosynthesis via de novo pathway; O-acetyl-L-homoserine from L-homoserine: step 1/1. Transfers an acetyl group from acetyl-CoA to L-homoserine, forming acetyl-L-homoserine. The chain is Homoserine O-acetyltransferase from Bacillus subtilis (strain 168).